We begin with the raw amino-acid sequence, 558 residues long: Type I restriction enzyme MjaIX methylase subunit (558 aa).

The segment at 1 to 37 is disordered; that stretch reads MATLDKFLSIKENDEKTKKKESKKKSSKSNKTSESLV. The segment covering 8-18 has biased composition (basic and acidic residues); that stretch reads LSIKENDEKTK. Over residues 19–28 the composition is skewed to basic residues; sequence KKESKKKSSK. S-adenosyl-L-methionine is bound by residues 227-232, 256-258, and Asp-283; these read KFYTPR and SGG.

Belongs to the N(4)/N(6)-methyltransferase family. The type I restriction/modification system is composed of three polypeptides R, M and S.

The catalysed reaction is a 2'-deoxyadenosine in DNA + S-adenosyl-L-methionine = an N(6)-methyl-2'-deoxyadenosine in DNA + S-adenosyl-L-homocysteine + H(+). In terms of biological role, the subtype gamma methyltransferase (M) subunit of a type I restriction enzyme. The M and S subunits together form a methyltransferase (MTase) that methylates A-3 on the top and A-2 on the bottom strand of the sequence 5'-CCAN(5)GTR-3'. In the presence of the R subunit the complex can also act as an endonuclease, binding to the same target sequence but cutting the DNA some distance from this site. Whether the DNA is cut or modified depends on the methylation state of the target sequence. When the target site is unmodified, the DNA is cut. When the target site is hemimethylated, the complex acts as a maintenance MTase modifying the DNA so that both strands become methylated. After locating a non-methylated recognition site, the enzyme complex serves as a molecular motor that translocates DNA in an ATP-dependent manner until a collision occurs that triggers cleavage. The polypeptide is Type I restriction enzyme MjaIX methylase subunit (Methanocaldococcus jannaschii (strain ATCC 43067 / DSM 2661 / JAL-1 / JCM 10045 / NBRC 100440) (Methanococcus jannaschii)).